The sequence spans 261 residues: Mite allergen Eur m 3 (261 aa).

The signal sequence occupies residues 1-18 (MVICNAIIVLLLAFNTLA). A propeptide spanning residues 19–29 (NPILPSSPNAT) is cleaved from the precursor. In terms of domain architecture, Peptidase S1 spans 30–260 (IVGGQKAKAG…FIDWIDSKRS (231 aa)). Cys54 and Cys70 are disulfide-bonded. Residues His69 and Asp114 each act as charge relay system in the active site. 2 cysteine pairs are disulfide-bonded: Cys181–Cys198 and Cys210–Cys236. Ser214 (charge relay system) is an active-site residue.

The protein belongs to the peptidase S1 family.

It is found in the secreted. The chain is Mite allergen Eur m 3 (EURM3) from Euroglyphus maynei (Mayne's house dust mite).